Here is a 516-residue protein sequence, read N- to C-terminus: MLWEFFALFAIAAALFYRWASANNDFFKDRGIAYEKPVLYFGNMAGMFLRKRAMFDIVCDLYTKGGSKKFFGIFEQRQPLLMVRDPDLIKQITIKDFDHFINHRNVFATSSDDDPHDMSNLFGSSLFSMRDARWKDMRSTLSPAFTGSKMRQMFQLMNQVAKEAVDCLKQDDSRVQENELDMKDYCTRFTNDVIASTAFGLQVNSFKDRENTFYQMGKKLTTFTFLQSMKFMLFFALKGLNKILKVELFDRKSTQYFVRLVLDAMKYRQEHNIVRPDMINMLMEARGIIQTEKTKASAVREWSDRDIVAQCFVFFFAGFETSAVLMCFTAHELMENQDVQQRLYEEVQQVDQDLEGKELTYEAIMGMKYLDQVVNEVLRKWPAAIAVDRECNKDITFDVDGQKVEVKKGDVIWLPTCGFHRDPKYFENPMKFDPERFSDENKESIQPFTYFPFGLGQRNCIGSRFALLEAKAVIYYLLKDYRFAPAKKSCIPLELITSGFQLSPKGGFWIKLVQRN.

Residue C460 coordinates heme.

Belongs to the cytochrome P450 family. The cofactor is heme.

The protein localises to the endoplasmic reticulum membrane. It localises to the microsome membrane. Its function is as follows. May be involved in the metabolism of insect hormones and in the breakdown of synthetic insecticides. This Drosophila melanogaster (Fruit fly) protein is Probable cytochrome P450 9f2 (Cyp9f2).